The primary structure comprises 182 residues: Small ribosomal subunit protein uS5 (182 aa).

Residues 16-79 (FVDRLVHINR…EAAKRGMIYV (64 aa)) enclose the S5 DRBM domain.

Belongs to the universal ribosomal protein uS5 family. In terms of assembly, part of the 30S ribosomal subunit. Contacts proteins S4 and S8.

Its function is as follows. With S4 and S12 plays an important role in translational accuracy. In terms of biological role, located at the back of the 30S subunit body where it stabilizes the conformation of the head with respect to the body. The chain is Small ribosomal subunit protein uS5 from Bartonella quintana (strain Toulouse) (Rochalimaea quintana).